The sequence spans 236 residues: 2,3,4,5-tetrahydropyridine-2,6-dicarboxylate N-acetyltransferase (236 aa).

The protein belongs to the transferase hexapeptide repeat family. DapH subfamily.

It carries out the reaction (S)-2,3,4,5-tetrahydrodipicolinate + acetyl-CoA + H2O = L-2-acetamido-6-oxoheptanedioate + CoA. It functions in the pathway amino-acid biosynthesis; L-lysine biosynthesis via DAP pathway; LL-2,6-diaminopimelate from (S)-tetrahydrodipicolinate (acetylase route): step 1/3. In terms of biological role, catalyzes the transfer of an acetyl group from acetyl-CoA to tetrahydrodipicolinate. In Geobacillus sp. (strain WCH70), this protein is 2,3,4,5-tetrahydropyridine-2,6-dicarboxylate N-acetyltransferase.